We begin with the raw amino-acid sequence, 351 residues long: Porphobilinogen deaminase (351 aa).

Cys-242 bears the S-(dipyrrolylmethanemethyl)cysteine mark.

This sequence belongs to the HMBS family. As to quaternary structure, monomer. Dipyrromethane is required as a cofactor.

It carries out the reaction 4 porphobilinogen + H2O = hydroxymethylbilane + 4 NH4(+). Its pathway is porphyrin-containing compound metabolism; protoporphyrin-IX biosynthesis; coproporphyrinogen-III from 5-aminolevulinate: step 2/4. Its function is as follows. Tetrapolymerization of the monopyrrole PBG into the hydroxymethylbilane pre-uroporphyrinogen in several discrete steps. This chain is Porphobilinogen deaminase, found in Rickettsia rickettsii (strain Sheila Smith).